We begin with the raw amino-acid sequence, 84 residues long: Putative membrane protein insertion efficiency factor (84 aa).

Belongs to the UPF0161 family.

The protein resides in the cell membrane. Functionally, could be involved in insertion of integral membrane proteins into the membrane. The sequence is that of Putative membrane protein insertion efficiency factor from Staphylococcus carnosus (strain TM300).